The primary structure comprises 239 residues: Small ribosomal subunit protein uS2 (239 aa).

The protein belongs to the universal ribosomal protein uS2 family.

The sequence is that of Small ribosomal subunit protein uS2 from Francisella tularensis subsp. tularensis (strain FSC 198).